Reading from the N-terminus, the 911-residue chain is Beta-galactosidase 12 (911 aa).

The signal sequence occupies residues 1–25 (MAARVAAAVAAALLAAALLLPGAAA). E192 functions as the Proton donor in the catalytic mechanism. The active-site Nucleophile is E262. N-linked (GlcNAc...) asparagine glycans are attached at residues N263, N389, N473, and N777. The region spanning 744–831 (EDTSTRGTLN…ATLAVQLLLA (88 aa)) is the SUEL-type lectin domain.

The protein belongs to the glycosyl hydrolase 35 family.

The protein resides in the secreted. It is found in the extracellular space. The protein localises to the apoplast. It carries out the reaction Hydrolysis of terminal non-reducing beta-D-galactose residues in beta-D-galactosides.. This Oryza sativa subsp. japonica (Rice) protein is Beta-galactosidase 12.